The primary structure comprises 79 residues: MDQTPIADMKFETALAELEDIVASMEGGKLELEASIAAYKRGMELMKHCQNQLADAEAQIRVLENGQFKDVDRSTLEAQ.

Belongs to the XseB family. Heterooligomer composed of large and small subunits.

The protein localises to the cytoplasm. It carries out the reaction Exonucleolytic cleavage in either 5'- to 3'- or 3'- to 5'-direction to yield nucleoside 5'-phosphates.. Its function is as follows. Bidirectionally degrades single-stranded DNA into large acid-insoluble oligonucleotides, which are then degraded further into small acid-soluble oligonucleotides. This Dechloromonas aromatica (strain RCB) protein is Exodeoxyribonuclease 7 small subunit.